The following is a 470-amino-acid chain: UTP--glucose-1-phosphate uridylyltransferase 1 (470 aa).

An N-acetylalanine modification is found at Ala-2. UTP contacts are provided by residues 86 to 89 (LNGG), Lys-100, Gln-163, and Gly-192. Residue 88–89 (GG) participates in substrate binding. Residues His-193 and 221–223 (NSD) each bind substrate. Residues Asp-223 and Lys-361 each contribute to the UTP site.

This sequence belongs to the UDPGP type 1 family. In terms of tissue distribution, expressed in roots, rosette leaves, cauline leaves, stems, flowers and siliques.

It localises to the cytoplasm. It carries out the reaction alpha-D-glucose 1-phosphate + UTP + H(+) = UDP-alpha-D-glucose + diphosphate. Converts glucose 1-phosphate to UDP-glucose, which is the major glycosyl donor for polysaccharides. Acts redundantly with UGP2 and is essential for the synthesis of sucrose, starch and cell wall, and callose deposition. Involved in the regulation of the programmed cell death (PCD) induced by the fungal toxin fumonisin B1 (FB1). This chain is UTP--glucose-1-phosphate uridylyltransferase 1, found in Arabidopsis thaliana (Mouse-ear cress).